A 287-amino-acid polypeptide reads, in one-letter code: 4-hydroxybenzoate octaprenyltransferase (287 aa).

The next 5 membrane-spanning stretches (helical) occupy residues 35–55 (FAAG…GVVV), 96–116 (LFGV…PLVV), 211–231 (IIAA…MLAG), 235–255 (IYGL…KLIY), and 262–282 (CFTA…ALTL).

The protein belongs to the UbiA prenyltransferase family. Requires Mg(2+) as cofactor.

The protein localises to the cell inner membrane. It catalyses the reaction all-trans-octaprenyl diphosphate + 4-hydroxybenzoate = 4-hydroxy-3-(all-trans-octaprenyl)benzoate + diphosphate. Its pathway is cofactor biosynthesis; ubiquinone biosynthesis. Its function is as follows. Catalyzes the prenylation of para-hydroxybenzoate (PHB) with an all-trans polyprenyl group. Mediates the second step in the final reaction sequence of ubiquinone-8 (UQ-8) biosynthesis, which is the condensation of the polyisoprenoid side chain with PHB, generating the first membrane-bound Q intermediate 3-octaprenyl-4-hydroxybenzoate. The polypeptide is 4-hydroxybenzoate octaprenyltransferase (Shewanella halifaxensis (strain HAW-EB4)).